The following is a 434-amino-acid chain: N-lysine methyltransferase SMYD2-B (434 aa).

The SET domain maps to 8-242; it reads PGIEQFASPG…PGQEIYTSYI (235 aa). Residue 18-20 participates in S-adenosyl-L-methionine binding; sequence KGR. The Zn(2+) site is built by cysteine 53, cysteine 56, cysteine 66, cysteine 69, cysteine 75, cysteine 79, histidine 87, and cysteine 91. The segment at 53–91 adopts an MYND-type zinc-finger fold; it reads CEQCFTRKKGLAKCGKCKKAFYCNANCQKKNWPMHKLEC. S-adenosyl-L-methionine contacts are provided by residues histidine 138, 207 to 208, and 259 to 261; these read NH and YYF.

It belongs to the class V-like SAM-binding methyltransferase superfamily.

The protein localises to the cytoplasm. The protein resides in the cytosol. It localises to the nucleus. It catalyses the reaction L-lysyl(4)-[histone H3] + 3 S-adenosyl-L-methionine = N(6),N(6),N(6)-trimethyl-L-lysyl(4)-[histone H3] + 3 S-adenosyl-L-homocysteine + 3 H(+). The enzyme catalyses L-lysyl-[protein] + S-adenosyl-L-methionine = N(6)-methyl-L-lysyl-[protein] + S-adenosyl-L-homocysteine + H(+). Protein-lysine N-methyltransferase that methylates both histones and non-histone proteins, including p53/TP53 and RB1. Specifically trimethylates histone H3 'Lys-4' (H3K4me3) in vivo. The activity requires interaction with HSP90alpha. Shows even higher methyltransferase activity on p53/TP53. Monomethylates 'Lys-370' of p53/TP53, leading to decreased DNA-binding activity and subsequent transcriptional regulation activity of p53/TP53. Monomethylates RB1 at 'Lys-860'. The protein is N-lysine methyltransferase SMYD2-B (smyd2b) of Danio rerio (Zebrafish).